The sequence spans 541 residues: MMQHTSVWYRRSVSPFVLVASVAVFLTATANLTFFDKISQTYPIADNLGFVLTIAVVLFGAMLLITTLLSSYRYVLKPVLILLLIMGAVTSYFTDTYGTVYDTTMLQNALQTDQAETKDLLNAAFIMRIIGLGVLPSLLVAFVKVDYPTWGKGLMRRLGLIVASLALILLPVVAFSSHYASFFRVHKPLRSYVNPIMPIYSVGKLASIEYKKASAPKDTIYHAKDAVQATKPDMRKPRLVVFVVGETARADHVSFNGYERDTFPQLAKIDGVTNFSNVTSCGTSTAYSVPCMFSYLGADEYDVDTAKYQENVLDTLDRLGVSILWRDNNSDSKGVMDKLPKAQFADYKSATNNAICNTNPYNECRDVGMLVGLDDFVAANNGKDMLIMLHQMGNHGPAYFKRYDEKFAKFTPVCEGNELAKCEHQSLINAYDNALLATDDFIAQSIQWLQTHSNAYDVSMLYVSDHGESLGENGVYLHGMPNAFAPKEQRSVPAFFWTDKQTGITPMATDTVLTHDAITPTLLKLFDVTADKVKDRTAFIR.

The Cytoplasmic segment spans residues 1–14 (MMQHTSVWYRRSVS). The chain crosses the membrane as a helical span at residues 15–35 (PFVLVASVAVFLTATANLTFF). Over 36–47 (DKISQTYPIADN) the chain is Periplasmic. Residues 48–68 (LGFVLTIAVVLFGAMLLITTL) form a helical membrane-spanning segment. Over 69–73 (LSSYR) the chain is Cytoplasmic. Residues 74-94 (YVLKPVLILLLIMGAVTSYFT) form a helical membrane-spanning segment. Residues 95–122 (DTYGTVYDTTMLQNALQTDQAETKDLLN) lie on the Periplasmic side of the membrane. The chain crosses the membrane as a helical span at residues 123-143 (AAFIMRIIGLGVLPSLLVAFV). Residues 144–157 (KVDYPTWGKGLMRR) lie on the Cytoplasmic side of the membrane. A helical transmembrane segment spans residues 158 to 178 (LGLIVASLALILLPVVAFSSH). Topologically, residues 179–541 (YASFFRVHKP…KVKDRTAFIR (363 aa)) are periplasmic. Zn(2+) is bound by residues E246 and T285. Disulfide bonds link C281-C291, C356-C364, and C414-C422. T285 bears the Phosphothreonine mark. The Zn(2+) site is built by D465 and H466.

Belongs to the phosphoethanolamine transferase family. In terms of assembly, monomer. Post-translationally, phosphorylated at Thr-285; may represent an intermediate in the catalytic mechanism.

It is found in the cell inner membrane. It catalyses the reaction lipid A (E. coli) + a 1,2-diacyl-sn-glycero-3-phosphoethanolamine + H(+) = lipid A 4'-(2-aminoethyl diphosphate) (E. coli) + a 1,2-diacyl-sn-glycerol. With respect to regulation, EDTA may inhibit activity. May be inhibited by ethanolamine. Its function is as follows. Probably catalyzes the addition of a phosphoethanolamine moiety to lipid A. Phosphoethanolamine modification of lipid A confers polymyxin resistance. Confers resistance to polymyxin-type antibiotics such as colistin; in the E.coli strain W3110. This chain is Phosphatidylethanolamine transferase Mcr-1 (mcr1), found in Escherichia coli.